Here is a 380-residue protein sequence, read N- to C-terminus: Queuine tRNA-ribosyltransferase (380 aa).

The active-site Proton acceptor is the Asp-96. Substrate-binding positions include Asp-96–Phe-100, Asp-150, Gln-193, and Gly-220. An RNA binding region spans residues Gly-251–Ser-257. Asp-270 functions as the Nucleophile in the catalytic mechanism. The segment at Thr-275–Arg-279 is RNA binding; important for wobble base 34 recognition. Residues Cys-308, Cys-310, Cys-313, and His-339 each coordinate Zn(2+).

This sequence belongs to the queuine tRNA-ribosyltransferase family. In terms of assembly, homodimer. Within each dimer, one monomer is responsible for RNA recognition and catalysis, while the other monomer binds to the replacement base PreQ1. It depends on Zn(2+) as a cofactor.

The catalysed reaction is 7-aminomethyl-7-carbaguanine + guanosine(34) in tRNA = 7-aminomethyl-7-carbaguanosine(34) in tRNA + guanine. The protein operates within tRNA modification; tRNA-queuosine biosynthesis. Functionally, catalyzes the base-exchange of a guanine (G) residue with the queuine precursor 7-aminomethyl-7-deazaguanine (PreQ1) at position 34 (anticodon wobble position) in tRNAs with GU(N) anticodons (tRNA-Asp, -Asn, -His and -Tyr). Catalysis occurs through a double-displacement mechanism. The nucleophile active site attacks the C1' of nucleotide 34 to detach the guanine base from the RNA, forming a covalent enzyme-RNA intermediate. The proton acceptor active site deprotonates the incoming PreQ1, allowing a nucleophilic attack on the C1' of the ribose to form the product. After dissociation, two additional enzymatic reactions on the tRNA convert PreQ1 to queuine (Q), resulting in the hypermodified nucleoside queuosine (7-(((4,5-cis-dihydroxy-2-cyclopenten-1-yl)amino)methyl)-7-deazaguanosine). This Streptococcus pneumoniae (strain P1031) protein is Queuine tRNA-ribosyltransferase.